We begin with the raw amino-acid sequence, 228 residues long: D-lyxose/D-mannose isomerase (228 aa).

The Mn(2+) site is built by His103, His105, Glu110, and His171.

It belongs to the D-lyxose ketol-isomerase family. In terms of assembly, homodimer. The cofactor is Mn(2+).

The enzyme catalyses D-lyxose = D-xylulose. It carries out the reaction D-mannose = D-fructose. Functionally, sugar isomerase that catalyzes the reversible isomerization of D-lyxose to D-xylulose, and D-mannose to D-fructose. Shows optimum activity using D-lyxose as substrate, but can also effectively catalyze the isomerization between D-fructose and D-mannose. Shows lower activity with L-gulose, D-talose and L-ribose. This Serratia proteamaculans protein is D-lyxose/D-mannose isomerase.